The primary structure comprises 448 residues: MLIQRGGLKVVAGLGISGVSAVNFLHEQGYQVAVTDSRPTPPGHDQIPAGVKTSFGQLDQELLLQAEEIILSPGLAPQLPEIQAAIAKGISVVGDIQLLRRATDVPIVAITGSNAKSTVTTLIGLMAKDAGKKVAVGGNLGRPALDLLKDQPELLVLELSSFQLETTSHLNAEVAVVLNMSEDHLDRHGNMLGYHQAKHRIFQGAKKVVFNRDDALSRPLVPDTTPMQSFGLNAPDLNQYGVLRDADGTLWLARGLQRLIKSSDLYIQGMHNVANALACLALGEAIGLPMESMLETLKRFKGLEHRCEYVKTVRDVRYYNDSKGTNVGATLAAIDGLGAAIEVKKGKVALILGGQGKGQDFSPLRSSIEKYAKVVVLIGEDAPVIEQAIQGATKILHAATLKEAVELCQRETQAEDVVLLSPACASFDMFKSYNDRGQQFVACVNSLV.

112–118 (GSNAKST) contacts ATP.

This sequence belongs to the MurCDEF family.

The protein resides in the cytoplasm. The enzyme catalyses UDP-N-acetyl-alpha-D-muramoyl-L-alanine + D-glutamate + ATP = UDP-N-acetyl-alpha-D-muramoyl-L-alanyl-D-glutamate + ADP + phosphate + H(+). The protein operates within cell wall biogenesis; peptidoglycan biosynthesis. Cell wall formation. Catalyzes the addition of glutamate to the nucleotide precursor UDP-N-acetylmuramoyl-L-alanine (UMA). The chain is UDP-N-acetylmuramoylalanine--D-glutamate ligase from Acinetobacter baumannii (strain ACICU).